Reading from the N-terminus, the 191-residue chain is Cytochrome c oxidase assembly protein CtaG (191 aa).

Over 1–9 the chain is Cytoplasmic; it reads MSLSPHQKT. The chain crosses the membrane as a helical; Signal-anchor for type II membrane protein span at residues 10–30; the sequence is AGGLVLVVAVMGAASFAAVPF. At 31–191 the chain is on the periplasmic side; that stretch reads YNWFCRVTGF…LAAESATDVN (161 aa).

Belongs to the COX11/CtaG family.

The protein localises to the cell inner membrane. In terms of biological role, exerts its effect at some terminal stage of cytochrome c oxidase synthesis, probably by being involved in the insertion of the copper B into subunit I. The chain is Cytochrome c oxidase assembly protein CtaG from Cereibacter sphaeroides (strain ATCC 17023 / DSM 158 / JCM 6121 / CCUG 31486 / LMG 2827 / NBRC 12203 / NCIMB 8253 / ATH 2.4.1.) (Rhodobacter sphaeroides).